The following is a 331-amino-acid chain: Outer membrane lipoprotein PM1514 (331 aa).

The signal sequence occupies residues 1-20; sequence MQYFDIKKSLPVFCSLLITA. Cys-21 carries N-palmitoyl cysteine lipidation. Cys-21 carries S-diacylglycerol cysteine lipidation.

The protein localises to the cell outer membrane. It is found in the cell surface. The polypeptide is Outer membrane lipoprotein PM1514 (Pasteurella multocida (strain Pm70)).